A 309-amino-acid chain; its full sequence is Serine/threonine-protein phosphatase PP2A catalytic subunit (309 aa).

4 residues coordinate Mn(2+): D57, H59, D85, and N117. Residue H118 is the Proton donor of the active site. Residues H167 and H241 each contribute to the Mn(2+) site.

It belongs to the PPP phosphatase family. PP-2A subfamily. The cofactor is Mn(2+).

It catalyses the reaction O-phospho-L-seryl-[protein] + H2O = L-seryl-[protein] + phosphate. It carries out the reaction O-phospho-L-threonyl-[protein] + H2O = L-threonyl-[protein] + phosphate. This chain is Serine/threonine-protein phosphatase PP2A catalytic subunit, found in Brassica napus (Rape).